The primary structure comprises 1288 residues: VWFA and cache domain-containing protein 1 (1288 aa).

A signal peptide spans 1-49 (MAREPEEEETVRPAAVVRRCPRCPGWPGAPRPPLWLLCLVACWILGAVA). Residues 50-1109 (DADFSILDEA…ITLNMIKSAP (1060 aa)) lie on the Extracellular side of the membrane. Residue N159 is glycosylated (N-linked (GlcNAc...) asparagine). The region spanning 242 to 457 (HIVVILDHGA…TTVGRFYTNL (216 aa)) is the VWFA domain. 2 Cache domains span residues 467–546 (FSLP…SEPP) and 786–867 (LTGP…HPTL). A helical transmembrane segment spans residues 1110-1130 (VGPVAGGIMGCIMVLVLAVYA). The Cytoplasmic segment spans residues 1131–1288 (YRHQIHRRSH…VTVHTVDAEC (158 aa)). Disordered stretches follow at residues 1157–1176 (NLEN…RGII) and 1187–1237 (ERHV…VDVG). Over residues 1159–1174 (ENDRDERDDDSHEDRG) the composition is skewed to basic and acidic residues. The span at 1210–1229 (GYSTMSPQEDSENPPCNNDP) shows a compositional bias: polar residues.

The protein belongs to the calcium channel subunit alpha-2/delta family.

The protein resides in the membrane. Its function is as follows. May regulate voltage-dependent calcium channels. This Mus musculus (Mouse) protein is VWFA and cache domain-containing protein 1 (Cachd1).